The primary structure comprises 231 residues: GFP-like fluorescent chromoprotein FP538 (231 aa).

Phenylalanine 65 carries the phenylalanine amide; atypical modification. A cross-link (2-tetrahydro-2-pyridyl-5-imidazolinone (Lys-Gly)) is located at residues 66–68; sequence KYG. At tyrosine 67 the chain carries 2,3-didehydrotyrosine.

Belongs to the GFP family. In terms of assembly, homotetramer. Contains a chromophore consisting of modified amino acid residues. The chromophore is formed by autocatalytic backbone condensation between Xaa-N and Gly-(N+2), and oxidation of Tyr-(N+1) to didehydrotyrosine. In addition, the residue N lysine undergoes cyclization. The alpha-amino nitrogen is replaced by the epsilon-amino nitrogen, the peptide chain is broken, residue N-1 is released as an amide, and a double bond is formed between the alpha-carbon and the nitrogen so that a tetrahydropyridine ring results. Maturation of the chromophore requires nothing other than molecular oxygen. In terms of tissue distribution, tentacle and oral disk.

Functionally, pigment protein that is yellow in color. The polypeptide is GFP-like fluorescent chromoprotein FP538 (Zoanthus sp. (Green polyp)).